Consider the following 199-residue polypeptide: Extracellular superoxide dismutase [Cu-Zn] (199 aa).

A signal peptide spans 1–20; sequence MMIASFAIFLSHIIFITYAT. N-linked (GlcNAc...) asparagine glycosylation is found at Asn33, Asn60, and Asn70. Residues His89, His91, and His106 each contribute to the Cu cation site. An intrachain disulfide couples Cys100 to Cys192. His106 is a binding site for Zn(2+). An N-linked (GlcNAc...) asparagine glycan is attached at Asn111. Positions 114, 123, and 126 each coordinate Zn(2+). His163 lines the Cu cation pocket.

Belongs to the Cu-Zn superoxide dismutase family. As to quaternary structure, homodimer. It depends on Cu cation as a cofactor. The cofactor is Zn(2+).

Its subcellular location is the secreted. The protein resides in the extracellular space. It catalyses the reaction 2 superoxide + 2 H(+) = H2O2 + O2. In terms of biological role, protect the extracellular space from toxic effect of reactive oxygen intermediates by converting superoxide radicals into hydrogen peroxide and oxygen. May act in the parasite defense by neutralizing superoxide generated by activated leukocytes, thus acting as both an antioxidant and an anti-inflammatory factor. The protein is Extracellular superoxide dismutase [Cu-Zn] of Brugia pahangi (Filarial nematode worm).